Consider the following 122-residue polypeptide: Pupal cuticle protein Edg-78E (122 aa).

An N-terminal signal peptide occupies residues 1–16 (MYKYLFCLALIGCACA). Residues 36–96 (EGNYQYAYET…PVGDHLPTPP (61 aa)) form the Chitin-binding type R&amp;R domain.

In terms of tissue distribution, imaginal (anterior) epidermis.

Component of the cuticle of the pupa of fruit fly. This chain is Pupal cuticle protein Edg-78E (Edg78E), found in Drosophila melanogaster (Fruit fly).